The chain runs to 65 residues: Cold shock-like protein CspC (65 aa).

The CSD domain maps to 3-62; that stretch reads GRVKWFNAEKGFGFIEREDGDDVFVHFSAIQQDGYKSLEEGQQVEFDIVDGARGPQAANV.

In terms of assembly, homodimer.

It localises to the cytoplasm. The polypeptide is Cold shock-like protein CspC (cspC) (Bacillus cereus).